The primary structure comprises 344 residues: 1-acyl-sn-glycerol-3-phosphate acyltransferase BAT2, chloroplastic (344 aa).

The transit peptide at 1–49 (MDVASAPGVSSHPPYYSKPICSSQSSLIRIPINKGCCFARSSNLITSLH) directs the protein to the chloroplast. Residues 113-133 (GICFCLVAGVSAIVLIVLMIT) traverse the membrane as a helical segment. The HXXXXD motif motif lies at 188–193 (HQSFLD). The helical transmembrane segment at 210–230 (TGIFVIPVIGWAMSMMGVVPL) threads the bilayer.

Belongs to the 1-acyl-sn-glycerol-3-phosphate acyltransferase family. As to expression, widely expressed.

It localises to the plastid. The protein resides in the chloroplast membrane. It catalyses the reaction a fatty acyl-[ACP] + a 1-acyl-sn-glycero-3-phosphate = a 1,2-diacyl-sn-glycero-3-phosphate + holo-[ACP]. It carries out the reaction a 1-acyl-sn-glycero-3-phosphate + an acyl-CoA = a 1,2-diacyl-sn-glycero-3-phosphate + CoA. It participates in phospholipid metabolism; CDP-diacylglycerol biosynthesis; CDP-diacylglycerol from sn-glycerol 3-phosphate: step 2/3. Functionally, plastidial enzyme of the prokaryotic glycerol-3-phosphate pathway that converts lysophosphatidic acid (LPA) into phosphatidic acid by incorporating an acyl moiety at position sn-2. Utilizes palmitoyl-ACP (16:0-ACP) to produce phosphatidic acid containing a saturated group at position sn-2, which is characteristic of lipids synthesized by the prokaryotic pathway. In vitro, can use 16:0-CoA as acyl donor. The chain is 1-acyl-sn-glycerol-3-phosphate acyltransferase BAT2, chloroplastic from Brassica napus (Rape).